Reading from the N-terminus, the 452-residue chain is Xaa-Pro dipeptidase 1 (452 aa).

Mn(2+) contacts are provided by Asp-247, Asp-258, His-338, Glu-383, and Glu-422.

Belongs to the peptidase M24B family. Bacterial-type prolidase subfamily. Mn(2+) serves as cofactor.

The catalysed reaction is Xaa-L-Pro dipeptide + H2O = an L-alpha-amino acid + L-proline. Functionally, splits dipeptides with a prolyl residue in the C-terminal position. The polypeptide is Xaa-Pro dipeptidase 1 (Idiomarina loihiensis (strain ATCC BAA-735 / DSM 15497 / L2-TR)).